A 90-amino-acid chain; its full sequence is DNA-directed RNA polymerase subunit Rpo11 (90 aa).

Belongs to the archaeal Rpo11/eukaryotic RPB11/RPC19 RNA polymerase subunit family. In terms of assembly, part of the 13-subunit RNA polymerase complex.

Its subcellular location is the cytoplasm. It catalyses the reaction RNA(n) + a ribonucleoside 5'-triphosphate = RNA(n+1) + diphosphate. In terms of biological role, DNA-dependent RNA polymerase (RNAP) catalyzes the transcription of DNA into RNA using the four ribonucleoside triphosphates as substrates. This chain is DNA-directed RNA polymerase subunit Rpo11, found in Sulfolobus acidocaldarius (strain ATCC 33909 / DSM 639 / JCM 8929 / NBRC 15157 / NCIMB 11770).